A 103-amino-acid chain; its full sequence is Large ribosomal subunit protein bL21 (103 aa).

The protein belongs to the bacterial ribosomal protein bL21 family. As to quaternary structure, part of the 50S ribosomal subunit. Contacts protein L20.

Functionally, this protein binds to 23S rRNA in the presence of protein L20. This Bordetella avium (strain 197N) protein is Large ribosomal subunit protein bL21.